Here is a 305-residue protein sequence, read N- to C-terminus: Probable GTP 3',8-cyclase (305 aa).

One can recognise a Radical SAM core domain in the interval 6–228; sequence NHRRPLVSLR…MTRKFMQDRK (223 aa). Position 15 (arginine 15) interacts with GTP. 2 residues coordinate [4Fe-4S] cluster: cysteine 22 and cysteine 26. Tyrosine 28 serves as a coordination point for S-adenosyl-L-methionine. Cysteine 29 is a binding site for [4Fe-4S] cluster. Arginine 62 is a binding site for GTP. Glycine 66 is a binding site for S-adenosyl-L-methionine. Threonine 92 serves as a coordination point for GTP. Serine 116 contributes to the S-adenosyl-L-methionine binding site. Residue lysine 153 participates in GTP binding. [4Fe-4S] cluster contacts are provided by cysteine 249 and cysteine 252. 254-256 provides a ligand contact to GTP; that stretch reads RLR. Position 266 (cysteine 266) interacts with [4Fe-4S] cluster.

Belongs to the radical SAM superfamily. MoaA family. [4Fe-4S] cluster serves as cofactor.

It carries out the reaction GTP + AH2 + S-adenosyl-L-methionine = (8S)-3',8-cyclo-7,8-dihydroguanosine 5'-triphosphate + 5'-deoxyadenosine + L-methionine + A + H(+). Its pathway is cofactor biosynthesis; molybdopterin biosynthesis. Its function is as follows. Catalyzes the cyclization of GTP to (8S)-3',8-cyclo-7,8-dihydroguanosine 5'-triphosphate. This Methanothermobacter marburgensis (strain ATCC BAA-927 / DSM 2133 / JCM 14651 / NBRC 100331 / OCM 82 / Marburg) (Methanobacterium thermoautotrophicum) protein is Probable GTP 3',8-cyclase.